A 161-amino-acid polypeptide reads, in one-letter code: IVIPRTMEDLDLQKVAGTWHSMAMAASDISLLDSETAPLRVYIQELRPTPQDNLEIVLRKWEDNRCVEKKVFAEKTELAAXFSINYVEENQIFLLDTDYDNYLFFCMENANAPQQSLMCQCLARTLEVNNEVIGKFNRALKTLPVHMQLLNPTQVEEQCLV.

Intrachain disulfides connect cysteine 66-cysteine 159 and cysteine 106-cysteine 119.

It belongs to the calycin superfamily. Lipocalin family. In terms of assembly, monomer. In terms of tissue distribution, synthesized in mammary gland and secreted in milk.

The protein localises to the secreted. In terms of biological role, primary component of whey, it binds retinol and is probably involved in the transport of that molecule. The polypeptide is Beta-lactoglobulin-2 (LGB2) (Canis lupus familiaris (Dog)).